Here is a 419-residue protein sequence, read N- to C-terminus: Histidine--tRNA ligase (419 aa).

This sequence belongs to the class-II aminoacyl-tRNA synthetase family. In terms of assembly, homodimer.

Its subcellular location is the cytoplasm. The catalysed reaction is tRNA(His) + L-histidine + ATP = L-histidyl-tRNA(His) + AMP + diphosphate + H(+). This chain is Histidine--tRNA ligase, found in Novosphingobium aromaticivorans (strain ATCC 700278 / DSM 12444 / CCUG 56034 / CIP 105152 / NBRC 16084 / F199).